The chain runs to 376 residues: NAD(P)H-quinone oxidoreductase subunit 1, chloroplastic (376 aa).

Transmembrane regions (helical) follow at residues 27–47 (LISI…GVLV), 65–85 (PEYA…KLLI), 97–117 (WLFS…YLVV), 130–150 (LGIF…LIAG), 166–186 (AAQS…ISLL), 251–271 (GIKF…SSLF), 272–292 (AVVL…IFFI), 310–330 (LIIP…FIFF), and 353–373 (FLLP…LTLF).

It belongs to the complex I subunit 1 family. As to quaternary structure, NDH is composed of at least 16 different subunits, 5 of which are encoded in the nucleus.

It is found in the plastid. Its subcellular location is the chloroplast thylakoid membrane. The enzyme catalyses a plastoquinone + NADH + (n+1) H(+)(in) = a plastoquinol + NAD(+) + n H(+)(out). The catalysed reaction is a plastoquinone + NADPH + (n+1) H(+)(in) = a plastoquinol + NADP(+) + n H(+)(out). NDH shuttles electrons from NAD(P)H:plastoquinone, via FMN and iron-sulfur (Fe-S) centers, to quinones in the photosynthetic chain and possibly in a chloroplast respiratory chain. The immediate electron acceptor for the enzyme in this species is believed to be plastoquinone. Couples the redox reaction to proton translocation, and thus conserves the redox energy in a proton gradient. The chain is NAD(P)H-quinone oxidoreductase subunit 1, chloroplastic from Chara vulgaris (Common stonewort).